Consider the following 171-residue polypeptide: Probable deoxyuridine 5'-triphosphate nucleotidohydrolase (171 aa).

Belongs to the dCTP deaminase family. Archaeal dUTPase subfamily.

It catalyses the reaction dUTP + H2O = dUMP + diphosphate + H(+). It participates in pyrimidine metabolism; dUMP biosynthesis; dUMP from dCTP (dUTP route): step 2/2. In terms of biological role, this enzyme is involved in nucleotide metabolism: it produces dUMP, the immediate precursor of thymidine nucleotides and it decreases the intracellular concentration of dUTP so that uracil cannot be incorporated into DNA. In Methanosarcina barkeri (strain Fusaro / DSM 804), this protein is Probable deoxyuridine 5'-triphosphate nucleotidohydrolase.